Consider the following 137-residue polypeptide: 2-iminobutanoate/2-iminopropanoate deaminase (137 aa).

S2 bears the N-acetylserine mark. Residues K13 and K67 each carry the N6-succinyllysine modification. Residue T74 is modified to Phosphothreonine. Phosphoserine is present on S136.

The protein belongs to the RutC family. Homotrimer. Interacts with YTHDF2.

The protein localises to the cytoplasm. It is found in the nucleus. It localises to the peroxisome. Its subcellular location is the mitochondrion. The enzyme catalyses 2-iminobutanoate + H2O = 2-oxobutanoate + NH4(+). The catalysed reaction is 2-iminopropanoate + H2O = pyruvate + NH4(+). Catalyzes the hydrolytic deamination of enamine/imine intermediates that form during the course of normal metabolism. May facilitate the release of ammonia from these potentially toxic reactive metabolites, reducing their impact on cellular components. It may act on enamine/imine intermediates formed by several types of pyridoxal-5'-phosphate-dependent dehydratases including L-threonine dehydratase. Its function is as follows. Also promotes endoribonucleolytic cleavage of some transcripts by promoting recruitment of the ribonuclease P/MRP complex. Acts by bridging YTHDF2 and the ribonuclease P/MRP complex. RIDA/HRSP12 binds to N6-methyladenosine (m6A)-containing mRNAs containing a 5'-GGUUC-3' motif: cooperative binding of RIDA/HRSP12 and YTHDF2 to such transcripts lead to recruitment of the ribonuclease P/MRP complex and subsequent endoribonucleolytic cleavage. The polypeptide is 2-iminobutanoate/2-iminopropanoate deaminase (Bos taurus (Bovine)).